Here is a 419-residue protein sequence, read N- to C-terminus: Creatine kinase S-type, mitochondrial (419 aa).

Residues 1–39 (MASAFSKLLTGRNASLLFTTLGTSALTTGYLLNRQKVSA) constitute a mitochondrion transit peptide. Positions 40–64 (DAREQHKLFPPSADYPDLRKHNNCM) are cardiolipin-binding. A Phosphagen kinase N-terminal domain is found at 46–132 (KLFPPSADYP…FDPVIKLRHN (87 aa)). Positions 159 to 401 (YVLSSRVRTG…NYLVDCEKKL (243 aa)) constitute a Phosphagen kinase C-terminal domain. Residues 162–166 (SSRVR) and His-225 each bind ATP. Tyr-255 carries the post-translational modification Phosphotyrosine. Residues Arg-270, Arg-326, 354–359 (RGTGGV), and Asp-369 contribute to the ATP site. Thr-356 bears the Phosphothreonine mark.

The protein belongs to the ATP:guanido phosphotransferase family. In terms of assembly, exists as an octamer composed of four CKMT2 homodimers. In terms of tissue distribution, sarcomere-specific. Found only in heart and skeletal muscles.

It localises to the mitochondrion inner membrane. The enzyme catalyses creatine + ATP = N-phosphocreatine + ADP + H(+). Its function is as follows. Reversibly catalyzes the transfer of phosphate between ATP and various phosphogens (e.g. creatine phosphate). Creatine kinase isoenzymes play a central role in energy transduction in tissues with large, fluctuating energy demands, such as skeletal muscle, heart, brain and spermatozoa. The polypeptide is Creatine kinase S-type, mitochondrial (Ckmt2) (Rattus norvegicus (Rat)).